A 434-amino-acid chain; its full sequence is N-acylneuraminate cytidylyltransferase (434 aa).

An N-acetylmethionine modification is found at Met1. Positions 1 to 42 (MDSVEKGAATSVSNPRGRPSRGRPPKLQRNSRGGQGRGVEKP) are disordered. The BC1 motif signature appears at 15–31 (PRGRPSRGRPPKLQRNS). 2 positions are modified to omega-N-methylarginine: Arg37 and Arg52. The substrate site is built by Arg52, Asn62, Arg111, Ser120, Ser122, and Gln143. Positions 200–206 (KRPRRQD) match the BC2 motif motif. Arg201 is a catalytic residue. The BC3 motif motif lies at 269 to 276 (KEKLKEIK).

Belongs to the CMP-NeuNAc synthase family. As to quaternary structure, homotetramer; the active enzyme is formed by a dimer of dimers. As to expression, ubiquitously expressed. Expressed in pancreas, kidney, liver, skeletal muscle, lung, placenta, brain, heart, colon, PBL, small intestine, ovary, testis, prostate, thymus and spleen.

Its subcellular location is the nucleus. The catalysed reaction is an N-acylneuraminate + CTP = a CMP-N-acyl-beta-neuraminate + diphosphate. It participates in amino-sugar metabolism; N-acetylneuraminate metabolism. Its function is as follows. Catalyzes the activation of N-acetylneuraminic acid (NeuNAc) to cytidine 5'-monophosphate N-acetylneuraminic acid (CMP-NeuNAc), a substrate required for the addition of sialic acid. Has some activity toward NeuNAc, N-glycolylneuraminic acid (Neu5Gc) or 2-keto-3-deoxy-D-glycero-D-galacto-nononic acid (KDN). The polypeptide is N-acylneuraminate cytidylyltransferase (CMAS) (Homo sapiens (Human)).